The sequence spans 716 residues: Polyribonucleotide nucleotidyltransferase (716 aa).

Mg(2+)-binding residues include D480 and D486. Residues P547–I606 form the KH domain. The region spanning G616–V711 is the S1 motif domain.

It belongs to the polyribonucleotide nucleotidyltransferase family. Requires Mg(2+) as cofactor.

The protein localises to the cytoplasm. The enzyme catalyses RNA(n+1) + phosphate = RNA(n) + a ribonucleoside 5'-diphosphate. Involved in mRNA degradation. Catalyzes the phosphorolysis of single-stranded polyribonucleotides processively in the 3'- to 5'-direction. This Borreliella burgdorferi (strain ATCC 35210 / DSM 4680 / CIP 102532 / B31) (Borrelia burgdorferi) protein is Polyribonucleotide nucleotidyltransferase.